A 481-amino-acid polypeptide reads, in one-letter code: UDP-N-acetylmuramoyl-L-alanyl-D-glutamate--L-lysine ligase (481 aa).

Serine 42 lines the UDP-N-acetyl-alpha-D-muramoyl-L-alanyl-D-glutamate pocket. 118–124 (GTKGKTT) contacts ATP. UDP-N-acetyl-alpha-D-muramoyl-L-alanyl-D-glutamate-binding positions include glutamine 158, 160-161 (TT), serine 187, and arginine 195. Lysine 229 carries the post-translational modification N6-carboxylysine. The short motif at 404–407 (DDPN) is the L-lysine recognition motif element.

This sequence belongs to the MurCDEF family. MurE subfamily. Post-translationally, carboxylation is probably crucial for Mg(2+) binding and, consequently, for the gamma-phosphate positioning of ATP.

Its subcellular location is the cytoplasm. The enzyme catalyses UDP-N-acetyl-alpha-D-muramoyl-L-alanyl-D-glutamate + L-lysine + ATP = UDP-N-acetyl-alpha-D-muramoyl-L-alanyl-gamma-D-glutamyl-L-lysine + ADP + phosphate + H(+). It functions in the pathway cell wall biogenesis; peptidoglycan biosynthesis. In terms of biological role, catalyzes the addition of L-lysine to the nucleotide precursor UDP-N-acetylmuramoyl-L-alanyl-D-glutamate (UMAG) in the biosynthesis of bacterial cell-wall peptidoglycan. The polypeptide is UDP-N-acetylmuramoyl-L-alanyl-D-glutamate--L-lysine ligase (Streptococcus pyogenes serotype M28 (strain MGAS6180)).